The sequence spans 667 residues: Probable endo-1,3(4)-beta-glucanase AFLA_105200 (667 aa).

A signal peptide spans methionine 1–alanine 24. Residues aspartate 25 to glycine 288 form the GH16 domain. Residue asparagine 63 is glycosylated (N-linked (GlcNAc...) asparagine). Catalysis depends on glutamate 144, which acts as the Nucleophile. Glutamate 149 functions as the Proton donor in the catalytic mechanism. 2 stretches are compositionally biased toward polar residues: residues valine 354 to leucine 363 and alanine 379 to valine 394. 2 disordered regions span residues valine 354–valine 427 and glycine 448–serine 646. 3 stretches are compositionally biased toward low complexity: residues alanine 395–valine 427, glycine 448–proline 483, and alanine 574–alanine 622. Over residues proline 623–glutamate 637 the composition is skewed to polar residues. A lipid anchor (GPI-anchor amidated glycine) is attached at glycine 644. A propeptide spans alanine 645 to alanine 667 (removed in mature form).

This sequence belongs to the glycosyl hydrolase 16 family.

It localises to the cell membrane. It catalyses the reaction Endohydrolysis of (1-&gt;3)- or (1-&gt;4)-linkages in beta-D-glucans when the glucose residue whose reducing group is involved in the linkage to be hydrolyzed is itself substituted at C-3.. Mixed-linked glucanase involved in the degradation of complex natural cellulosic substrates. The chain is Probable endo-1,3(4)-beta-glucanase AFLA_105200 from Aspergillus flavus (strain ATCC 200026 / FGSC A1120 / IAM 13836 / NRRL 3357 / JCM 12722 / SRRC 167).